The following is a 422-amino-acid chain: Glycine amidinotransferase, mitochondrial (422 aa).

The N-terminal 37 residues, 1–37 (MLRVRCLRGGSRGAEAAHFIGSRLGRAFTGWVQRSLQ), are a transit peptide targeting the mitochondrion. Active-site residues include Asp-253 and His-302. Cys-406 functions as the Amidino-cysteine intermediate in the catalytic mechanism. Phosphothreonine is present on Thr-416.

The protein belongs to the amidinotransferase family. Homodimer.

It localises to the mitochondrion inner membrane. It carries out the reaction L-arginine + glycine = guanidinoacetate + L-ornithine. It functions in the pathway amine and polyamine biosynthesis; creatine biosynthesis; creatine from L-arginine and glycine: step 1/2. Catalyzes the biosynthesis of guanidinoacetate, the immediate precursor of creatine. Creatine plays a vital role in energy metabolism in muscle tissues. May play a role in embryonic and central nervous system development. The chain is Glycine amidinotransferase, mitochondrial from Gallus gallus (Chicken).